The chain runs to 144 residues: Large ribosomal subunit protein uL15 (144 aa).

Residues 1–54 (MRLNTLSPAEGSKKAGKRLGRGIGSGLGKTGGRGHKGQKSRSGGGVRRGFEGGQ) form a disordered region. Positions 21-31 (RGIGSGLGKTG) are enriched in gly residues.

It belongs to the universal ribosomal protein uL15 family. In terms of assembly, part of the 50S ribosomal subunit.

Functionally, binds to the 23S rRNA. The polypeptide is Large ribosomal subunit protein uL15 (Salmonella arizonae (strain ATCC BAA-731 / CDC346-86 / RSK2980)).